We begin with the raw amino-acid sequence, 208 residues long: Ribosomal RNA large subunit methyltransferase E (208 aa).

S-adenosyl-L-methionine-binding residues include glycine 63, tryptophan 65, aspartate 83, aspartate 99, and aspartate 124. The active-site Proton acceptor is the lysine 164.

The protein belongs to the class I-like SAM-binding methyltransferase superfamily. RNA methyltransferase RlmE family.

Its subcellular location is the cytoplasm. The catalysed reaction is uridine(2552) in 23S rRNA + S-adenosyl-L-methionine = 2'-O-methyluridine(2552) in 23S rRNA + S-adenosyl-L-homocysteine + H(+). Specifically methylates the uridine in position 2552 of 23S rRNA at the 2'-O position of the ribose in the fully assembled 50S ribosomal subunit. The protein is Ribosomal RNA large subunit methyltransferase E of Salmonella typhi.